A 545-amino-acid polypeptide reads, in one-letter code: Calcium-dependent protein kinase 10 (545 aa).

Residues 1–36 (MGNCNACVRPDSKESKPSSKPKKPNRDRKLNPFAGD) are disordered. Gly-2 is lipidated: N-myristoyl glycine. The Protein kinase domain maps to 63–321 (YILGRELGRG…AQQVLAHPWI (259 aa)). ATP contacts are provided by residues 69 to 77 (LGRGEFGIT) and Lys-92. Asp-187 (proton acceptor) is an active-site residue. At Ser-227 the chain carries Phosphoserine. Residues 327-357 (APNVPLGDIVRSRLKQFSMMNRFKKKVLRVI) are autoinhibitory domain. EF-hand domains follow at residues 364–399 (QEVEVIKNMFSLMDDDKDGKITYPELKAGLQKVGSQ), 400–435 (LGEPEIKMLMEVADVDGNGFLDYGEFVAVIIHLQKI), 436–471 (ENDELFKLAFMFFDKDGSTYIELDELREALADELGE), and 472–507 (PDASVLSDIMREVDTDKDGRINYDEFVTMMKAGTDW). The Ca(2+) site is built by Asp-377, Asp-379, Asp-381, Lys-383, Glu-388, Asp-413, Asp-415, Asn-417, Glu-424, Asp-449, Asp-451, Ser-453, Tyr-455, Glu-460, Asp-485, Asp-487, Asp-489, Arg-491, and Glu-496.

The protein belongs to the protein kinase superfamily. Ser/Thr protein kinase family. CDPK subfamily.

The protein localises to the membrane. It catalyses the reaction L-seryl-[protein] + ATP = O-phospho-L-seryl-[protein] + ADP + H(+). The catalysed reaction is L-threonyl-[protein] + ATP = O-phospho-L-threonyl-[protein] + ADP + H(+). Activated by calcium. Autophosphorylation may play an important role in the regulation of the kinase activity. Its function is as follows. May play a role in signal transduction pathways that involve calcium as a second messenger. May be a positive regulator controlling stress signal transduction. This chain is Calcium-dependent protein kinase 10 (CPK10), found in Arabidopsis thaliana (Mouse-ear cress).